The primary structure comprises 183 residues: Mast cell-expressed membrane protein 1 (183 aa).

Positions 1 to 26 are disordered; sequence MHASASQDKNRRKPGHDEGAHNPDYE. Residues 1–70 lie on the Cytoplasmic side of the membrane; it reads MHASASQDKN…PPWLYRTIMM (70 aa). The span at 15-24 shows a compositional bias: basic and acidic residues; sequence GHDEGAHNPD. Residues 71–91 traverse the membrane as a helical; Signal-anchor for type II membrane protein segment; sequence LYVLLALVFLSCIVLSALVLV. Over 92 to 183 the chain is Extracellular; it reads KNSEMSKELW…EKKAQPQPST (92 aa). N109 carries N-linked (GlcNAc...) asparagine glycosylation.

Its subcellular location is the membrane. The protein is Mast cell-expressed membrane protein 1 of Mus musculus (Mouse).